We begin with the raw amino-acid sequence, 314 residues long: 2,3-dihydroxyphenylpropionate/2,3-dihydroxicinnamic acid 1,2-dioxygenase (314 aa).

The Proton donor role is filled by His-115. Catalysis depends on His-179, which acts as the Proton acceptor.

This sequence belongs to the LigB/MhpB extradiol dioxygenase family. In terms of assembly, homotetramer. Requires Fe(2+) as cofactor.

It catalyses the reaction 3-(2,3-dihydroxyphenyl)propanoate + O2 = (2Z,4E)-2-hydroxy-6-oxonona-2,4-dienedioate + H(+). The catalysed reaction is (2E)-3-(2,3-dihydroxyphenyl)prop-2-enoate + O2 = (2Z,4E,7E)-2-hydroxy-6-oxonona-2,4,7-trienedioate + H(+). The protein operates within aromatic compound metabolism; 3-phenylpropanoate degradation. Its function is as follows. Catalyzes the non-heme iron(II)-dependent oxidative cleavage of 2,3-dihydroxyphenylpropionic acid and 2,3-dihydroxicinnamic acid into 2-hydroxy-6-ketononadienedioate and 2-hydroxy-6-ketononatrienedioate, respectively. The protein is 2,3-dihydroxyphenylpropionate/2,3-dihydroxicinnamic acid 1,2-dioxygenase of Cupriavidus pinatubonensis (strain JMP 134 / LMG 1197) (Cupriavidus necator (strain JMP 134)).